The primary structure comprises 121 residues: Group 1 truncated hemoglobin (121 aa).

Met1 is modified (N-acetylmethionine). Residue His73 coordinates heme.

Belongs to the truncated hemoglobin family. Group I subfamily. As to quaternary structure, monomer. The cofactor is heme.

This is Group 1 truncated hemoglobin from Tetrahymena pyriformis.